Consider the following 855-residue polypeptide: DNA mismatch repair protein MutS (855 aa).

616-623 (GPNMGGKS) is an ATP binding site.

Belongs to the DNA mismatch repair MutS family.

This protein is involved in the repair of mismatches in DNA. It is possible that it carries out the mismatch recognition step. This protein has a weak ATPase activity. In Escherichia coli O139:H28 (strain E24377A / ETEC), this protein is DNA mismatch repair protein MutS.